A 591-amino-acid polypeptide reads, in one-letter code: MAANMYRVGDYVYFENSSSNPYLIRRIEELNKTASGNVEAKVVCFYRRRDISNTLIMLADKHAKETEEESETPVEADLTEKQKHQLKHRELFLSRQYESLPATHIRGKCSVALLNETESVLSYLDKEDTFFYSLVYDPSVKTLLADKGEIRVGPKYQADIPDMLPEDSDEREQSKLEVKVWDPNSPLTDRQIDQFLVVARAVGTFARALDCSSSVRQPSLHMSAAAASRDITLFHAMDTLYRHGYDLSSAISVLVPLGGPVLCRDEMEEWSASEACLFEEALEKYGKDFNDIRQDFLPWKSLTSIIEYYYMWKTTDRYVQQKRLKAAEAESKLKQVYIPTYKPNPNQISSSNGKAGTVNGAVGTQFQPQSALLGRACESCYATQSHQWYSWGPPNMQCRLCATCWLYWKKYGGLKMPTQSDEEKSPSPTAEDPRARSHMSRQALQGMPVRNTGSPKSAVKTRQAFFLRTTYFTKIARQVCKSTLRLRQAARRPFVAINYAAIRAEYADRHAELSGSPLKSRSTRKPLSCIIGYLEIHPAKKPNVIRSPPSLQTPATKRMLAAPNHTSLSILGKRNYSHHNGLDGPERWLSR.

The 147-residue stretch at 1–147 folds into the BAH domain; it reads MAANMYRVGD…PSVKTLLADK (147 aa). Residues 148-258 enclose the ELM2 domain; that stretch reads GEIRVGPKYQ…SAISVLVPLG (111 aa). The 53-residue stretch at 265–317 folds into the SANT domain; that stretch reads DEMEEWSASEACLFEEALEKYGKDFNDIRQDFLPWKSLTSIIEYYYMWKTTDR. Residues 377–404 form a GATA-type; atypical zinc finger; the sequence is CESCYATQSHQWYSWGPPNMQCRLCATC. The segment at 417–456 is disordered; that stretch reads PTQSDEEKSPSPTAEDPRARSHMSRQALQGMPVRNTGSPK. The segment covering 421-435 has biased composition (basic and acidic residues); sequence DEEKSPSPTAEDPRA. 2 positions are modified to phosphoserine: Ser425 and Ser427. Phosphothreonine is present on Thr452. Ser516 is subject to Phosphoserine.

The protein belongs to the metastasis-associated protein family. As to quaternary structure, component of the nucleosome remodeling and deacetylase (NuRD) repressor complex, composed of core proteins MTA1, MTA2, MTA3, RBBP4, RBBP7, HDAC1, HDAC2, MBD2, MBD3, and peripherally associated proteins CDK2AP1, CDK2AP2, GATAD2A, GATAD2B, CHD3, CHD4 and CHD5. The exact stoichiometry of the NuRD complex is unknown, and some subunits such as MBD2 and MBD3, GATAD2A and GATAD2B, and CHD3, CHD4 and CHD5 define mutually exclusive NuRD complexes. Interacts with BCL6. Interacts with NACC2. Interacts with PWWP2B. Expressed in heart, brain, spleen, lung, liver and kidney.

Its subcellular location is the nucleus. The protein localises to the cytoplasm. In terms of biological role, acts as a component of the histone deacetylase NuRD complex which participates in the remodeling of chromatin. Plays a role in maintenance of the normal epithelial architecture through the repression of SNAI1 transcription in a histone deacetylase-dependent manner, and thus the regulation of E-cadherin levels. Contributes to transcriptional repression by BCL6. The protein is Metastasis-associated protein MTA3 (Mta3) of Mus musculus (Mouse).